The sequence spans 247 residues: Potassium channel Ftrac_2467 (247 aa).

A run of 6 helical transmembrane segments spans residues 23-44, 56-78, 89-117, 142-165, 187-210, and 215-237; these read TRIE…VLSS, SMRD…YQHY, KVTI…RFLS, LKLL…LMYW, SIIA…IDPW, and TTIL…GRIT. The RxxxFSD motif motif lies at 24-30; that stretch reads RIETFSD.

The protein belongs to the TMEM175 family. In terms of assembly, homotetramer.

The protein resides in the cell membrane. The enzyme catalyses K(+)(in) = K(+)(out). Potassium channel; forms a potassium-permeable leak-like channel with weak selectivity for potassium. The channel is permeable for K(+), Rb(+) and Cs(+). The protein is Potassium channel Ftrac_2467 of Marivirga tractuosa (strain ATCC 23168 / DSM 4126 / NBRC 15989 / NCIMB 1408 / VKM B-1430 / H-43) (Microscilla tractuosa).